Consider the following 357-residue polypeptide: MSSATAAATATIAAAAAAAAKLAATPAPAPSRRRLTLRGNPTARRCVAAMAVSTPRSAAAAAFLERRESERALHFVKYQGLGNDFIMMDNRDSAVPKVTPEEAAKLCDRNFGVGADGVIFVMPGVNGADYTMRIFNSDGSEPEMCGNGVRCFARFIAELENLQGTHSFKIHTGAGLIIPEIQNDGKVKVDMGQPILSGPDIPTKLPSTKNEAVVQADLAVDGSTWQVTCVSMGNPHCVTFGTKELKVLHVDDLKLSDIGPKFEHHEMFPARTNTEFVEVLSRSHLKMRVWERGAGATLACGTGACAVVVAAVLEGRAERKCVVDLPGGPLEIEWREDDNHIYMTGPAEAVFYGSAVH.

The N-terminal 47 residues, 1 to 47 (MSSATAAATATIAAAAAAAAKLAATPAPAPSRRRLTLRGNPTARRCV), are a transit peptide targeting the chloroplast. Active-site residues include Cys-145 and Cys-300.

This sequence belongs to the diaminopimelate epimerase family.

The protein localises to the plastid. Its subcellular location is the chloroplast. It catalyses the reaction (2S,6S)-2,6-diaminopimelate = meso-2,6-diaminopimelate. The protein operates within amino-acid biosynthesis; L-lysine biosynthesis via DAP pathway; DL-2,6-diaminopimelate from LL-2,6-diaminopimelate: step 1/1. This is Putative diaminopimelate epimerase, chloroplastic (DAPF) from Oryza sativa subsp. indica (Rice).